Consider the following 715-residue polypeptide: Fatty acid oxidation complex subunit alpha (715 aa).

Residues 1–190 are enoyl-CoA hydratase; that stretch reads MTTTSAFMLN…KAGLVDDVVP (190 aa). Positions 306–715 are 3-hydroxyacyl-CoA dehydrogenase; the sequence is GPLNSVGILG…WTNGETDQGN (410 aa).

This sequence in the N-terminal section; belongs to the enoyl-CoA hydratase/isomerase family. It in the central section; belongs to the 3-hydroxyacyl-CoA dehydrogenase family. Heterotetramer of two alpha chains (FadJ) and two beta chains (FadI).

The protein resides in the cytoplasm. It catalyses the reaction a (3S)-3-hydroxyacyl-CoA = a (2E)-enoyl-CoA + H2O. The catalysed reaction is a 4-saturated-(3S)-3-hydroxyacyl-CoA = a (3E)-enoyl-CoA + H2O. It carries out the reaction a (3S)-3-hydroxyacyl-CoA + NAD(+) = a 3-oxoacyl-CoA + NADH + H(+). The enzyme catalyses (3S)-3-hydroxybutanoyl-CoA = (3R)-3-hydroxybutanoyl-CoA. It participates in lipid metabolism; fatty acid beta-oxidation. Its function is as follows. Catalyzes the formation of a hydroxyacyl-CoA by addition of water on enoyl-CoA. Also exhibits 3-hydroxyacyl-CoA epimerase and 3-hydroxyacyl-CoA dehydrogenase activities. This is Fatty acid oxidation complex subunit alpha from Salmonella gallinarum (strain 287/91 / NCTC 13346).